Here is a 325-residue protein sequence, read N- to C-terminus: GMP reductase (325 aa).

Cys-174 acts as the Thioimidate intermediate in catalysis. NADP(+) is bound at residue 203-226 (IVADGGIRNNGDIAKSIRFGASMC).

The protein belongs to the IMPDH/GMPR family. GuaC type 2 subfamily.

The enzyme catalyses IMP + NH4(+) + NADP(+) = GMP + NADPH + 2 H(+). In terms of biological role, catalyzes the irreversible NADPH-dependent deamination of GMP to IMP. It functions in the conversion of nucleobase, nucleoside and nucleotide derivatives of G to A nucleotides, and in maintaining the intracellular balance of A and G nucleotides. In Ligilactobacillus salivarius (strain UCC118) (Lactobacillus salivarius), this protein is GMP reductase.